A 231-amino-acid polypeptide reads, in one-letter code: Large ribosomal subunit protein uL1 (231 aa).

Belongs to the universal ribosomal protein uL1 family. In terms of assembly, part of the 50S ribosomal subunit.

Binds directly to 23S rRNA. The L1 stalk is quite mobile in the ribosome, and is involved in E site tRNA release. Its function is as follows. Protein L1 is also a translational repressor protein, it controls the translation of the L11 operon by binding to its mRNA. This is Large ribosomal subunit protein uL1 from Mesomycoplasma hyopneumoniae (strain 232) (Mycoplasma hyopneumoniae).